Consider the following 265-residue polypeptide: 4-hydroxy-tetrahydrodipicolinate reductase (265 aa).

Residue G16–M21 participates in NAD(+) binding. Residue R43 participates in NADP(+) binding. NAD(+)-binding positions include G106 to T108 and S130 to F133. H164 (proton donor/acceptor) is an active-site residue. Residue H165 participates in (S)-2,3,4,5-tetrahydrodipicolinate binding. K168 acts as the Proton donor in catalysis. Residue A174–T175 participates in (S)-2,3,4,5-tetrahydrodipicolinate binding.

Belongs to the DapB family. Homotetramer.

The protein localises to the cytoplasm. The enzyme catalyses (S)-2,3,4,5-tetrahydrodipicolinate + NAD(+) + H2O = (2S,4S)-4-hydroxy-2,3,4,5-tetrahydrodipicolinate + NADH + H(+). It catalyses the reaction (S)-2,3,4,5-tetrahydrodipicolinate + NADP(+) + H2O = (2S,4S)-4-hydroxy-2,3,4,5-tetrahydrodipicolinate + NADPH + H(+). It functions in the pathway amino-acid biosynthesis; L-lysine biosynthesis via DAP pathway; (S)-tetrahydrodipicolinate from L-aspartate: step 4/4. Its function is as follows. Catalyzes the conversion of 4-hydroxy-tetrahydrodipicolinate (HTPA) to tetrahydrodipicolinate. The sequence is that of 4-hydroxy-tetrahydrodipicolinate reductase from Wigglesworthia glossinidia brevipalpis.